Reading from the N-terminus, the 81-residue chain is Large ribosomal subunit protein bL31B (81 aa).

It belongs to the bacterial ribosomal protein bL31 family. Type B subfamily. Part of the 50S ribosomal subunit.

The chain is Large ribosomal subunit protein bL31B from Bacillus licheniformis (strain ATCC 14580 / DSM 13 / JCM 2505 / CCUG 7422 / NBRC 12200 / NCIMB 9375 / NCTC 10341 / NRRL NRS-1264 / Gibson 46).